We begin with the raw amino-acid sequence, 195 residues long: uncharacterized protein (195 aa).

This is an uncharacterized protein from Bacillus subtilis (strain 168).